The primary structure comprises 369 residues: Histidinol-phosphate aminotransferase 2 (369 aa).

Lys-229 carries the N6-(pyridoxal phosphate)lysine modification.

This sequence belongs to the class-II pyridoxal-phosphate-dependent aminotransferase family. Histidinol-phosphate aminotransferase subfamily. In terms of assembly, homodimer. The cofactor is pyridoxal 5'-phosphate.

The enzyme catalyses L-histidinol phosphate + 2-oxoglutarate = 3-(imidazol-4-yl)-2-oxopropyl phosphate + L-glutamate. It functions in the pathway amino-acid biosynthesis; L-histidine biosynthesis; L-histidine from 5-phospho-alpha-D-ribose 1-diphosphate: step 7/9. This Pseudomonas aeruginosa (strain ATCC 15692 / DSM 22644 / CIP 104116 / JCM 14847 / LMG 12228 / 1C / PRS 101 / PAO1) protein is Histidinol-phosphate aminotransferase 2 (hisC2).